The chain runs to 434 residues: Trigger factor (434 aa).

A PPIase FKBP-type domain is found at 160 to 245 (GDKVKMNFVG…LTEVQAANLP (86 aa)).

It belongs to the FKBP-type PPIase family. Tig subfamily.

Its subcellular location is the cytoplasm. It catalyses the reaction [protein]-peptidylproline (omega=180) = [protein]-peptidylproline (omega=0). Its function is as follows. Involved in protein export. Acts as a chaperone by maintaining the newly synthesized protein in an open conformation. Functions as a peptidyl-prolyl cis-trans isomerase. The protein is Trigger factor of Shewanella baltica (strain OS185).